The following is an 84-amino-acid chain: Small ribosomal subunit protein eS27 (84 aa).

The segment covering 1-16 has biased composition (basic and acidic residues); that stretch reads MPLAKDPLHPSPEEEK. Residues 1 to 25 are disordered; sequence MPLAKDPLHPSPEEEKRKHKKKRLV. S11 carries the post-translational modification Phosphoserine. The segment at 38 to 60 adopts a C4-type zinc-finger fold; sequence PGCYKITTVFSHAQTVVLCVGCS.

The protein belongs to the eukaryotic ribosomal protein eS27 family. As to quaternary structure, component of the small ribosomal subunit. Part of the small subunit (SSU) processome, composed of more than 70 proteins and the RNA chaperone small nucleolar RNA (snoRNA) U3. Requires Zn(2+) as cofactor.

The protein resides in the cytoplasm. The protein localises to the nucleus. Its subcellular location is the nucleolus. In terms of biological role, component of the small ribosomal subunit. The ribosome is a large ribonucleoprotein complex responsible for the synthesis of proteins in the cell. Required for proper rRNA processing and maturation of 18S rRNAs. Part of the small subunit (SSU) processome, first precursor of the small eukaryotic ribosomal subunit. During the assembly of the SSU processome in the nucleolus, many ribosome biogenesis factors, an RNA chaperone and ribosomal proteins associate with the nascent pre-rRNA and work in concert to generate RNA folding, modifications, rearrangements and cleavage as well as targeted degradation of pre-ribosomal RNA by the RNA exosome. This is Small ribosomal subunit protein eS27 (RPS27) from Pongo abelii (Sumatran orangutan).